We begin with the raw amino-acid sequence, 250 residues long: 3-deoxy-manno-octulosonate cytidylyltransferase (250 aa).

This sequence belongs to the KdsB family.

The protein localises to the cytoplasm. It carries out the reaction 3-deoxy-alpha-D-manno-oct-2-ulosonate + CTP = CMP-3-deoxy-beta-D-manno-octulosonate + diphosphate. The protein operates within nucleotide-sugar biosynthesis; CMP-3-deoxy-D-manno-octulosonate biosynthesis; CMP-3-deoxy-D-manno-octulosonate from 3-deoxy-D-manno-octulosonate and CTP: step 1/1. Its pathway is bacterial outer membrane biogenesis; lipopolysaccharide biosynthesis. In terms of biological role, activates KDO (a required 8-carbon sugar) for incorporation into bacterial lipopolysaccharide in Gram-negative bacteria. This Legionella pneumophila (strain Paris) protein is 3-deoxy-manno-octulosonate cytidylyltransferase.